The chain runs to 123 residues: Integration host factor subunit alpha (123 aa).

This sequence belongs to the bacterial histone-like protein family. In terms of assembly, heterodimer of an alpha and a beta chain.

This protein is one of the two subunits of integration host factor, a specific DNA-binding protein that functions in genetic recombination as well as in transcriptional and translational control. This is Integration host factor subunit alpha from Polaromonas naphthalenivorans (strain CJ2).